Reading from the N-terminus, the 127-residue chain is MSNTDSKTGPNTDPATCELDPAIAERVRFNADGLVPAIVQDITNGDVLMMAWMNDHALAHTLATKKGTYWSRSRQSYWIKGETSGHTQRVEEVRLDCDGDTVLLKIEQTGAACHTGNRTCFDADRLA.

Residue Asp96 participates in Mg(2+) binding. Cys97 contributes to the Zn(2+) binding site. Positions 98 and 100 each coordinate Mg(2+). Residues Cys113 and Cys120 each contribute to the Zn(2+) site.

This sequence belongs to the PRA-CH family. As to quaternary structure, homodimer. It depends on Mg(2+) as a cofactor. Zn(2+) is required as a cofactor.

The protein localises to the cytoplasm. The enzyme catalyses 1-(5-phospho-beta-D-ribosyl)-5'-AMP + H2O = 1-(5-phospho-beta-D-ribosyl)-5-[(5-phospho-beta-D-ribosylamino)methylideneamino]imidazole-4-carboxamide. Its pathway is amino-acid biosynthesis; L-histidine biosynthesis; L-histidine from 5-phospho-alpha-D-ribose 1-diphosphate: step 3/9. In terms of biological role, catalyzes the hydrolysis of the adenine ring of phosphoribosyl-AMP. The sequence is that of Phosphoribosyl-AMP cyclohydrolase from Corynebacterium jeikeium (strain K411).